We begin with the raw amino-acid sequence, 680 residues long: Meiotic recombination protein REC8 (680 aa).

Low complexity-rich tracts occupy residues 278 to 290 and 436 to 446; these read ENDNENNSNGGED and SLVSTQSSSST. Disordered regions lie at residues 278 to 297, 431 to 467, and 540 to 560; these read ENDNENNSNGGEDTSVENEG, RKRAHSLVSTQSSSSTRSHEYGRKSFRNNKNDNYSSD, and EQNFAEEDDSSNSCFSDGSQQ. Residues 550 to 560 show a composition bias toward polar residues; that stretch reads SNSCFSDGSQQ.

Belongs to the rad21 family. In terms of processing, proteolytically cleaved by ESP1. Phosphorylated by CDC5. CDC5 phosphorylation is necessary for cleavage by ESP1 and subsequent removal from chromosome arms.

The protein resides in the nucleus. The protein localises to the chromosome. It is found in the centromere. In terms of biological role, replaces the SCC1 mitosis-specific cohesin to ensure sister chromatid cohesion during meiosis. Is cleaved by ESP1 shortly before the first meiotic division, and dissociates from chromatin, allowing sister chromatids to segregate. Is protected from cleavage by SPO13. Promotes localization of the LINC complex subunit MPS3 on nuclear envelope in mitotic cells. The protein is Meiotic recombination protein REC8 of Saccharomyces cerevisiae (strain ATCC 204508 / S288c) (Baker's yeast).